Here is a 122-residue protein sequence, read N- to C-terminus: Large ribosomal subunit protein uL14 (122 aa).

It belongs to the universal ribosomal protein uL14 family. In terms of assembly, part of the 50S ribosomal subunit. Forms a cluster with proteins L3 and L19. In the 70S ribosome, L14 and L19 interact and together make contacts with the 16S rRNA in bridges B5 and B8.

Binds to 23S rRNA. Forms part of two intersubunit bridges in the 70S ribosome. The polypeptide is Large ribosomal subunit protein uL14 (Campylobacter hominis (strain ATCC BAA-381 / DSM 21671 / CCUG 45161 / LMG 19568 / NCTC 13146 / CH001A)).